A 234-amino-acid polypeptide reads, in one-letter code: (5-formylfuran-3-yl)methyl phosphate synthase (234 aa).

Residue K27 is the Schiff-base intermediate with substrate of the active site. K85 functions as the Proton acceptor in the catalytic mechanism.

It belongs to the MfnB family.

It catalyses the reaction 2 D-glyceraldehyde 3-phosphate = 4-(hydroxymethyl)-2-furancarboxaldehyde phosphate + phosphate + 2 H2O. It functions in the pathway cofactor biosynthesis; methanofuran biosynthesis. In terms of biological role, catalyzes the formation of 4-(hydroxymethyl)-2-furancarboxaldehyde phosphate (4-HFC-P) from two molecules of glyceraldehyde-3-P (GA-3-P). The protein is (5-formylfuran-3-yl)methyl phosphate synthase of Methanosarcina mazei (strain ATCC BAA-159 / DSM 3647 / Goe1 / Go1 / JCM 11833 / OCM 88) (Methanosarcina frisia).